We begin with the raw amino-acid sequence, 778 residues long: Semaphorin-3ab (778 aa).

Residues 1 to 17 (MDYLWWIVLLIWTLIAP) form the signal peptide. In terms of domain architecture, Sema spans 32–515 (RLKPSYKEML…SAIGVSQMPL (484 aa)). Asn54 is a glycosylation site (N-linked (GlcNAc...) asparagine). Cys105 and Cys116 are disulfide-bonded. Asn127 is a glycosylation site (N-linked (GlcNAc...) asparagine). 4 disulfides stabilise this stretch: Cys134/Cys143, Cys270/Cys382, Cys294/Cys342, and Cys518/Cys536. In terms of domain architecture, Ig-like C2-type spans 579 to 668 (GEAGLLDKTV…FIQTLLRLTL (90 aa)). N-linked (GlcNAc...) asparagine glycosylation is present at Asn593. A disulfide bridge links Cys652 with Cys716. The disordered stretch occupies residues 727-778 (RRQKANLLHASQSHTSQILHSSQSHAKWKLLQENKKGRNRRTHEMQRAPRSV). The span at 735–751 (HASQSHTSQILHSSQSH) shows a compositional bias: polar residues. Residues 756–778 (LLQENKKGRNRRTHEMQRAPRSV) show a composition bias toward basic and acidic residues.

It belongs to the semaphorin family. In terms of tissue distribution, expressed in rhombomeres three and five, and in the posterior half of newly formed somites which is avoided by ventrally extending motor axons.

It localises to the secreted. Its function is as follows. Might normally influence the midsegmental pathway choice of the ventrally extending motor axons by contributing to a repulsive domain in the posterior somite. In Danio rerio (Zebrafish), this protein is Semaphorin-3ab (sema3ab).